The following is a 281-amino-acid chain: Phytanoyl-CoA dioxygenase 1 (281 aa).

2-oxoglutarate contacts are provided by residues Lys-98, Met-137, 152–154, and Trp-169; that span reads HQD. Fe cation contacts are provided by His-152 and Asp-154. His-237 provides a ligand contact to Fe cation. Ser-239 and Arg-248 together coordinate 2-oxoglutarate.

The protein belongs to the PhyH family. Fe cation is required as a cofactor. It depends on L-ascorbate as a cofactor.

The enzyme catalyses phytanoyl-CoA + 2-oxoglutarate + O2 = 2-hydroxyphytanoyl-CoA + succinate + CO2. It functions in the pathway lipid metabolism; fatty acid metabolism. Functionally, converts phytanoyl-CoA to 2-hydroxyphytanoyl-CoA. This is Phytanoyl-CoA dioxygenase 1 from Oryza sativa subsp. japonica (Rice).